The chain runs to 212 residues: Imidazole glycerol phosphate synthase subunit HisH (212 aa).

The Glutamine amidotransferase type-1 domain maps to 1–210; the sequence is MIAVINYGAG…VRWSEAVQPK (210 aa). The Nucleophile role is filled by cysteine 79. Active-site residues include histidine 185 and glutamate 187.

Heterodimer of HisH and HisF.

It is found in the cytoplasm. The enzyme catalyses 5-[(5-phospho-1-deoxy-D-ribulos-1-ylimino)methylamino]-1-(5-phospho-beta-D-ribosyl)imidazole-4-carboxamide + L-glutamine = D-erythro-1-(imidazol-4-yl)glycerol 3-phosphate + 5-amino-1-(5-phospho-beta-D-ribosyl)imidazole-4-carboxamide + L-glutamate + H(+). The catalysed reaction is L-glutamine + H2O = L-glutamate + NH4(+). It functions in the pathway amino-acid biosynthesis; L-histidine biosynthesis; L-histidine from 5-phospho-alpha-D-ribose 1-diphosphate: step 5/9. Functionally, IGPS catalyzes the conversion of PRFAR and glutamine to IGP, AICAR and glutamate. The HisH subunit catalyzes the hydrolysis of glutamine to glutamate and ammonia as part of the synthesis of IGP and AICAR. The resulting ammonia molecule is channeled to the active site of HisF. This chain is Imidazole glycerol phosphate synthase subunit HisH, found in Chloroflexus aurantiacus (strain ATCC 29364 / DSM 637 / Y-400-fl).